The primary structure comprises 90 residues: Molybdopterin synthase sulfur carrier subunit (90 aa).

Gly90 bears the 1-thioglycine; alternate mark. Gly90 carries the glycyl adenylate; alternate modification.

This sequence belongs to the MoaD family. MOCS2A subfamily. Heterotetramer; composed of 2 small (Mocs2A) and 2 large (Mocs2B) subunits. In terms of processing, C-terminal thiocarboxylation occurs in 2 steps, it is first acyl-adenylated (-COAMP) via the hesA/moeB/thiF part of MOCS3, then thiocarboxylated (-COSH) via the rhodanese domain of MOCS3.

It is found in the cytoplasm. The protein operates within cofactor biosynthesis; molybdopterin biosynthesis. Acts as a sulfur carrier required for molybdopterin biosynthesis. Component of the molybdopterin synthase complex that catalyzes the conversion of precursor Z into molybdopterin by mediating the incorporation of 2 sulfur atoms into precursor Z to generate a dithiolene group. In the complex, serves as sulfur donor by being thiocarboxylated (-COSH) at its C-terminus by MOCS3. After interaction with Mocs2B, the sulfur is then transferred to precursor Z to form molybdopterin. This is Molybdopterin synthase sulfur carrier subunit from Drosophila yakuba (Fruit fly).